The primary structure comprises 161 residues: ATP synthase subunit b 2 (161 aa).

A helical transmembrane segment spans residues 13 to 33; the sequence is IVWLVIALVAMYFVMSRLAIP.

The protein belongs to the ATPase B chain family. In terms of assembly, F-type ATPases have 2 components, F(1) - the catalytic core - and F(0) - the membrane proton channel. F(1) has five subunits: alpha(3), beta(3), gamma(1), delta(1), epsilon(1). F(0) has three main subunits: a(1), b(2) and c(10-14). The alpha and beta chains form an alternating ring which encloses part of the gamma chain. F(1) is attached to F(0) by a central stalk formed by the gamma and epsilon chains, while a peripheral stalk is formed by the delta and b chains.

The protein localises to the cell inner membrane. F(1)F(0) ATP synthase produces ATP from ADP in the presence of a proton or sodium gradient. F-type ATPases consist of two structural domains, F(1) containing the extramembraneous catalytic core and F(0) containing the membrane proton channel, linked together by a central stalk and a peripheral stalk. During catalysis, ATP synthesis in the catalytic domain of F(1) is coupled via a rotary mechanism of the central stalk subunits to proton translocation. Functionally, component of the F(0) channel, it forms part of the peripheral stalk, linking F(1) to F(0). The b'-subunit is a diverged and duplicated form of b found in plants and photosynthetic bacteria. This chain is ATP synthase subunit b 2 (atpF2), found in Rhodospirillum rubrum (strain ATCC 11170 / ATH 1.1.1 / DSM 467 / LMG 4362 / NCIMB 8255 / S1).